Here is a 992-residue protein sequence, read N- to C-terminus: Aminopeptidase Q (992 aa).

Residues 2–13 (GPPSSSGFYVSR) are Cytoplasmic-facing. A helical; Signal-anchor for type II membrane protein transmembrane segment spans residues 14 to 34 (AVALLLAALAAALLLALAVLA). Residues 35–992 (ALYGRCARVQ…RMTAWLRKNT (958 aa)) are Extracellular-facing. Positions 48-92 (LHHGGVPDAASSPRGTQEEQLPTWPPRPTREPAGTATPGHWRPPG) are disordered. N-linked (GlcNAc...) asparagine glycosylation occurs at asparagine 133. Glutamate 241 serves as a coordination point for substrate. Residues asparagine 262, asparagine 289, asparagine 347, and asparagine 361 are each glycosylated (N-linked (GlcNAc...) asparagine). 380-384 (SAMEN) contacts substrate. Residue histidine 416 coordinates Zn(2+). Glutamate 417 serves as the catalytic Proton acceptor. Zn(2+)-binding residues include histidine 420 and glutamate 439. Residue asparagine 489 is glycosylated (N-linked (GlcNAc...) asparagine). Tyrosine 505 acts as the Proton donor in catalysis. N-linked (GlcNAc...) asparagine glycosylation is found at asparagine 584, asparagine 602, asparagine 609, asparagine 655, asparagine 811, asparagine 850, and asparagine 889.

Belongs to the peptidase M1 family. Zn(2+) is required as a cofactor. As to expression, expressed in skin. Expression levels do not differ between dark and light skin areas.

The protein localises to the membrane. Functionally, metalloprotease which may be important for placentation by regulating biological activity of key peptides at the embryo-maternal interface. Involved in coat pigmentation patterns. During skin development, may be required to establish the periodicity of tabby markings, initiating a pre-pattern at or before hair follicle development. The sequence is that of Aminopeptidase Q (LVRN) from Acinonyx jubatus (Cheetah).